Consider the following 281-residue polypeptide: Pantothenate synthetase (281 aa).

30 to 37 (MGNLHQGH) serves as a coordination point for ATP. Residue His-37 is the Proton donor of the active site. Residue Gln-61 coordinates (R)-pantoate. A beta-alanine-binding site is contributed by Gln-61. Position 149 to 152 (149 to 152 (GNKD)) interacts with ATP. Residue Gln-155 participates in (R)-pantoate binding. ATP is bound by residues Ile-178 and 186–189 (MSSR).

Belongs to the pantothenate synthetase family. In terms of assembly, homodimer.

The protein resides in the cytoplasm. The catalysed reaction is (R)-pantoate + beta-alanine + ATP = (R)-pantothenate + AMP + diphosphate + H(+). Its pathway is cofactor biosynthesis; (R)-pantothenate biosynthesis; (R)-pantothenate from (R)-pantoate and beta-alanine: step 1/1. Its function is as follows. Catalyzes the condensation of pantoate with beta-alanine in an ATP-dependent reaction via a pantoyl-adenylate intermediate. This is Pantothenate synthetase from Shewanella oneidensis (strain ATCC 700550 / JCM 31522 / CIP 106686 / LMG 19005 / NCIMB 14063 / MR-1).